The sequence spans 241 residues: tRNA (guanine-N(7)-)-methyltransferase B (241 aa).

S-adenosyl-L-methionine contacts are provided by glycine 61, glutamate 84, arginine 86, asparagine 117, alanine 118, and leucine 137. Residue aspartate 140 is part of the active site. The tract at residues 141–149 is alphaC helix; the sequence is PHFKKTKHK. 2 residues coordinate S-adenosyl-L-methionine: threonine 215 and glutamate 217. The tract at residues 215-223 is alpha6 helix; the sequence is TEEGKKVQR.

This sequence belongs to the class I-like SAM-binding methyltransferase superfamily. TrmB family. Catalytic component of the METTL1-WDR4 complex, composed of mettl1 and wdr4.

Its subcellular location is the nucleus. The catalysed reaction is guanosine(46) in tRNA + S-adenosyl-L-methionine = N(7)-methylguanosine(46) in tRNA + S-adenosyl-L-homocysteine. It carries out the reaction a guanosine in mRNA + S-adenosyl-L-methionine = an N(7)-methylguanosine in mRNA + S-adenosyl-L-homocysteine. The enzyme catalyses a guanosine in miRNA + S-adenosyl-L-methionine = an N(7)-methylguanosine in miRNA + S-adenosyl-L-homocysteine. It participates in tRNA modification; N(7)-methylguanine-tRNA biosynthesis. Catalytic component of METTL1-WDR4 methyltransferase complex that mediates the formation of N(7)-methylguanine in a subset of RNA species, such as tRNAs, mRNAs and microRNAs (miRNAs). Catalyzes the formation of N(7)-methylguanine at position 46 (m7G46) in a large subset of tRNAs that contain the 5'-RAGGU-3' motif within the variable loop. M7G46 interacts with C13-G22 in the D-loop to stabilize tRNA tertiary structure and protect tRNAs from decay. Also acts as a methyltransferase for a subset of internal N(7)-methylguanine in mRNAs. Internal N(7)-methylguanine methylation of mRNAs in response to stress promotes their relocalization to stress granules, thereby suppressing their translation. Also methylates a specific subset of miRNAs. This Xenopus tropicalis (Western clawed frog) protein is tRNA (guanine-N(7)-)-methyltransferase B (mettl1-B).